Reading from the N-terminus, the 372-residue chain is Ciliary neurotrophic factor receptor subunit alpha (372 aa).

The N-terminal stretch at 1–22 (MAASVPWACCAVLAAAAAAVYT) is a signal peptide. Positions 27-104 (PQEAPHVQYE…WHLRHQVLLH (78 aa)) constitute an Ig-like C2-type domain. A disulfide bond links cysteine 46 and cysteine 89. Asparagine 60, asparagine 70, asparagine 142, asparagine 190, and asparagine 261 each carry an N-linked (GlcNAc...) asparagine glycan. Fibronectin type-III domains are found at residues 108–205 (PPRE…VKPD) and 206–306 (PPEN…TEEP). Residues 290-294 (WSDWS) carry the WSXWS motif motif. The segment at 301–339 (PWTEEPRHLTTEAQAPETTTSTTSSLAPPPTTKICDPGE) is disordered. Positions 311 to 326 (TEAQAPETTTSTTSSL) are enriched in low complexity. A lipid anchor (GPI-anchor amidated serine) is attached at serine 342. Residues 343 to 372 (GGGPSIPFLTSVPVTLVLAAAAATANNLLI) constitute a propeptide, removed in mature form.

This sequence belongs to the type I cytokine receptor family. Type 3 subfamily. Forms a heterotrimer with LIFR and IL6ST. Interacts with heterodimeric neurotropic cytokine composed of CLCF1/CLC and CRLF1/CLF-1. Either alone or in complex with the heterodimer CLCF1-CRLF1 interacts with SORL1; this interaction may promote internalization and lysosomal degradation. As to expression, nervous system.

The protein localises to the cell membrane. Functionally, binds to CNTF. The alpha subunit provides the receptor specificity. In Rattus norvegicus (Rat), this protein is Ciliary neurotrophic factor receptor subunit alpha (Cntfr).